A 310-amino-acid polypeptide reads, in one-letter code: Porphobilinogen deaminase (310 aa).

C242 carries the post-translational modification S-(dipyrrolylmethanemethyl)cysteine.

Belongs to the HMBS family. As to quaternary structure, monomer. Requires dipyrromethane as cofactor.

The enzyme catalyses 4 porphobilinogen + H2O = hydroxymethylbilane + 4 NH4(+). The protein operates within porphyrin-containing compound metabolism; protoporphyrin-IX biosynthesis; coproporphyrinogen-III from 5-aminolevulinate: step 2/4. Its function is as follows. Tetrapolymerization of the monopyrrole PBG into the hydroxymethylbilane pre-uroporphyrinogen in several discrete steps. This Shewanella baltica (strain OS195) protein is Porphobilinogen deaminase.